A 1287-amino-acid polypeptide reads, in one-letter code: DENN domain-containing protein 5A (1287 aa).

The 203-residue stretch at 57 to 259 folds into the uDENN domain; sequence STTEGENFEQ…EVPLPPPGRS (203 aa). Ser193 carries the post-translational modification Phosphoserine. Residues 278–414 enclose the cDENN domain; it reads ELPLFDFPVK…LEFVQEVSEI (137 aa). Residues 416–598 form the dDENN domain; the sequence is MAFGVPPEGN…IMCHDDDDKD (183 aa). Residues 787–950 enclose the RUN 1 domain; that stretch reads VEENTLIASL…DYFCFTNVFT (164 aa). Residues 954-1062 form the PLAT domain; sequence IPYHILIVPS…DDGSLERVLV (109 aa). Thr1079 carries the phosphothreonine modification. 3 positions are modified to phosphoserine: Ser1085, Ser1087, and Ser1096. The RUN 2 domain occupies 1134–1280; it reads TLLLCGECGL…QEFNITLDTS (147 aa).

It belongs to the RAB6IP1 family. As to quaternary structure, interacts with RAB6A bound to GTP.

It is found in the golgi apparatus membrane. Functionally, guanine nucleotide exchange factor (GEF) which may activate RAB6A and RAB39A and/or RAB39B. Promotes the exchange of GDP to GTP, converting inactive GDP-bound Rab proteins into their active GTP-bound form. Involved in the negative regulation of neurite outgrowth. This chain is DENN domain-containing protein 5A (Dennd5a), found in Mus musculus (Mouse).